The sequence spans 107 residues: Large ribosomal subunit protein uL24 (107 aa).

Belongs to the universal ribosomal protein uL24 family. As to quaternary structure, part of the 50S ribosomal subunit.

Its function is as follows. One of two assembly initiator proteins, it binds directly to the 5'-end of the 23S rRNA, where it nucleates assembly of the 50S subunit. One of the proteins that surrounds the polypeptide exit tunnel on the outside of the subunit. In Fervidobacterium nodosum (strain ATCC 35602 / DSM 5306 / Rt17-B1), this protein is Large ribosomal subunit protein uL24.